The chain runs to 236 residues: ATP synthase subunit a (236 aa).

Helical transmembrane passes span 17-37 (WTNL…LFGL), 76-96 (SFFV…GLII), 113-133 (PVVT…AGVA), 170-190 (IFGN…MAFS), and 196-216 (MIVS…IGAI).

Belongs to the ATPase A chain family. F-type ATPases have 2 components, CF(1) - the catalytic core - and CF(0) - the membrane proton channel. CF(1) has five subunits: alpha(3), beta(3), gamma(1), delta(1), epsilon(1). CF(0) has three main subunits: a(1), b(2) and c(9-12). The alpha and beta chains form an alternating ring which encloses part of the gamma chain. CF(1) is attached to CF(0) by a central stalk formed by the gamma and epsilon chains, while a peripheral stalk is formed by the delta and b chains.

It localises to the cell membrane. Key component of the proton channel; it plays a direct role in the translocation of protons across the membrane. The polypeptide is ATP synthase subunit a (Limosilactobacillus fermentum (strain NBRC 3956 / LMG 18251) (Lactobacillus fermentum)).